Consider the following 214-residue polypeptide: Transmembrane emp24 domain-containing protein p24delta10 (214 aa).

The first 24 residues, 1–24, serve as a signal peptide directing secretion; sequence MFLQSQKLWTMLLILAIWSPISHS. The Lumenal segment spans residues 25-181; it reads LHFDLHSGRT…QDLNRSTNTK (157 aa). A GOLD domain is found at 34–149; that stretch reads TKCIAEDIKS…VEVMEFEVKS (116 aa). Residues 164–177 adopt a coiled-coil conformation; sequence LRDREEEMQDLNRS. At R167 the chain carries Omega-N-methylated arginine. N175 carries an N-linked (GlcNAc...) asparagine glycan. The chain crosses the membrane as a helical span at residues 182-202; it reads MAWLSVLSFFVCIGVAGMQFL. The Cytoplasmic segment spans residues 203–214; it reads HLKTFFEKKKVI. The COPII vesicle coat-binding signature appears at 207 to 208; it reads FF. The COPI vesicle coat-binding motif lies at 207–214; the sequence is FFEKKKVI.

Belongs to the EMP24/GP25L family. As to quaternary structure, probably oligomerizes with other members of the EMP24/GP25L family. Associates with the COPI vesicle coat (coatomer). Associates with the COPII vesicle coat (coatomer).

The protein resides in the endoplasmic reticulum membrane. The protein localises to the golgi apparatus. It is found in the cis-Golgi network membrane. Its subcellular location is the golgi stack membrane. Its function is as follows. Involved in vesicular protein trafficking. Mainly functions in the early secretory pathway. Thought to act as cargo receptor at the lumenal side for incorporation of secretory cargo molecules into transport vesicles and to be involved in vesicle coat formation at the cytoplasmic side. This is Transmembrane emp24 domain-containing protein p24delta10 from Arabidopsis thaliana (Mouse-ear cress).